The following is a 396-amino-acid chain: Elongation factor Tu (396 aa).

One can recognise a tr-type G domain in the interval 10 to 206 (KPHVNIGTIG…AVDSYIPDPE (197 aa)). Positions 19–26 (GHVDHGKT) are G1. Residue 19–26 (GHVDHGKT) participates in GTP binding. T26 is a Mg(2+) binding site. The G2 stretch occupies residues 60-64 (GITIA). Residues 81–84 (DCPG) are G3. Residues 81–85 (DCPGH) and 136–139 (NKAD) contribute to the GTP site. The segment at 136-139 (NKAD) is G4. The segment at 174–176 (SAL) is G5.

This sequence belongs to the TRAFAC class translation factor GTPase superfamily. Classic translation factor GTPase family. EF-Tu/EF-1A subfamily. As to quaternary structure, monomer.

The protein localises to the cytoplasm. The enzyme catalyses GTP + H2O = GDP + phosphate + H(+). Its function is as follows. GTP hydrolase that promotes the GTP-dependent binding of aminoacyl-tRNA to the A-site of ribosomes during protein biosynthesis. This Pelobacter propionicus (strain DSM 2379 / NBRC 103807 / OttBd1) protein is Elongation factor Tu.